Reading from the N-terminus, the 61-residue chain is Metallothionein-1 (61 aa).

An N-acetylmethionine modification is found at Met1. The beta stretch occupies residues 1 to 29; that stretch reads MDPNCSCSTGGSCTCSSSCGCKNCKCTSC. Residues Cys5, Cys7, Cys13, Cys15, Cys19, Cys21, Cys24, Cys26, Cys29, Cys33, Cys34, Cys36, Cys37, Cys41, Cys44, Cys48, Cys50, Cys57, Cys59, and Cys60 each contribute to the a divalent metal cation site. The alpha stretch occupies residues 30–61; it reads KKSCCSCCPVGCSKCAQGCVCKGASDKCTCCA.

Belongs to the metallothionein superfamily. Type 1 family.

In terms of biological role, metallothioneins have a high content of cysteine residues that bind various heavy metals; these proteins are transcriptionally regulated by both heavy metals and glucocorticoids. The protein is Metallothionein-1 (Mt1) of Rattus norvegicus (Rat).